Here is a 54-residue protein sequence, read N- to C-terminus: UPF0391 membrane protein Mpe_A2904 (54 aa).

The next 2 helical transmembrane spans lie at 5–25 and 30–50; these read AVVF…GIAA and IAKI…LFGL.

It belongs to the UPF0391 family.

The protein resides in the cell membrane. The protein is UPF0391 membrane protein Mpe_A2904 of Methylibium petroleiphilum (strain ATCC BAA-1232 / LMG 22953 / PM1).